Consider the following 309-residue polypeptide: L-lactate dehydrogenase (309 aa).

NAD(+) contacts are provided by residues Val12, Asp33, Arg38, Tyr63, and Gly77 to Ala78. Substrate-binding positions include Gln80, Arg86, and Asn118–Asp121. Residues Ala116–Asn118 and Ser141 contribute to the NAD(+) site. Asp146–Arg149 contacts substrate. Positions 151 and 166 each coordinate beta-D-fructose 1,6-bisphosphate. His173 serves as the catalytic Proton acceptor. A Phosphotyrosine modification is found at Tyr219. Thr228 serves as a coordination point for substrate.

It belongs to the LDH/MDH superfamily. LDH family. Homotetramer.

It localises to the cytoplasm. The enzyme catalyses (S)-lactate + NAD(+) = pyruvate + NADH + H(+). Its pathway is fermentation; pyruvate fermentation to lactate; (S)-lactate from pyruvate: step 1/1. Its activity is regulated as follows. Allosterically activated by fructose 1,6-bisphosphate (FBP). Its function is as follows. Catalyzes the conversion of lactate to pyruvate. The protein is L-lactate dehydrogenase of Nitratidesulfovibrio vulgaris (strain ATCC 29579 / DSM 644 / CCUG 34227 / NCIMB 8303 / VKM B-1760 / Hildenborough) (Desulfovibrio vulgaris).